Consider the following 689-residue polypeptide: Long-chain-fatty-acid--CoA ligase 2 (689 aa).

Residue 252-263 (YTSGSTGKPKGV) coordinates ATP. Residues 518 to 567 (DGWFKTGDVGEIAKGNTLRLIDRKKNIVKSLNGEYIALEKIEAQFFTSPL) carry the FACS motif.

The protein belongs to the ATP-dependent AMP-binding enzyme family. Requires Mg(2+) as cofactor.

It localises to the golgi apparatus. Its subcellular location is the vacuole membrane. It catalyses the reaction a long-chain fatty acid + ATP + CoA = a long-chain fatty acyl-CoA + AMP + diphosphate. Its function is as follows. Esterification, concomitant with transport, of endogenous long-chain fatty acids into metabolically active CoA thioesters for subsequent degradation or incorporation into phospholipids. Plays an important role in the determination of viability in the stationary phase. The protein is Long-chain-fatty-acid--CoA ligase 2 (lcf2) of Schizosaccharomyces pombe (strain 972 / ATCC 24843) (Fission yeast).